We begin with the raw amino-acid sequence, 230 residues long: 2,3-bisphosphoglycerate-dependent phosphoglycerate mutase (230 aa).

Substrate is bound by residues 8–15 (RHGESEWN), 21–22 (TG), arginine 60, 87–90 (ERHY), lysine 98, 114–115 (RR), and 183–184 (GN). Histidine 9 acts as the Tele-phosphohistidine intermediate in catalysis. The active-site Proton donor/acceptor is glutamate 87.

The protein belongs to the phosphoglycerate mutase family. BPG-dependent PGAM subfamily.

It catalyses the reaction (2R)-2-phosphoglycerate = (2R)-3-phosphoglycerate. The protein operates within carbohydrate degradation; glycolysis; pyruvate from D-glyceraldehyde 3-phosphate: step 3/5. Its function is as follows. Catalyzes the interconversion of 2-phosphoglycerate and 3-phosphoglycerate. The protein is 2,3-bisphosphoglycerate-dependent phosphoglycerate mutase of Streptococcus pneumoniae (strain ATCC BAA-255 / R6).